We begin with the raw amino-acid sequence, 216 residues long: Cytidylate kinase (216 aa).

An ATP-binding site is contributed by 7 to 15 (GPSGTGKST).

This sequence belongs to the cytidylate kinase family. Type 1 subfamily.

It localises to the cytoplasm. It carries out the reaction CMP + ATP = CDP + ADP. The catalysed reaction is dCMP + ATP = dCDP + ADP. The chain is Cytidylate kinase from Chlamydia trachomatis serovar L2 (strain ATCC VR-902B / DSM 19102 / 434/Bu).